A 177-amino-acid polypeptide reads, in one-letter code: Inorganic pyrophosphatase (177 aa).

Positions 31, 45, and 57 each coordinate substrate. Mg(2+) contacts are provided by Asp-67, Asp-72, and Asp-104. A substrate-binding site is contributed by Tyr-141.

This sequence belongs to the PPase family. As to quaternary structure, homohexamer. Also forms homotrimers, but the trimeric form is 23% less active than the hexamer. In fact, likely forms a dimer of trimers. Mg(2+) serves as cofactor.

It localises to the cytoplasm. The catalysed reaction is diphosphate + H2O = 2 phosphate + H(+). Its activity is regulated as follows. Inhibited by sodium fluoride (NaF) in vitro, similarly to other class A type inorganic pyrophosphatases. Catalyzes the hydrolysis of inorganic pyrophosphate (PPi) forming two phosphate ions. The hydrolysis of PPi by inorganic pyrophosphatase releases a considerable amount of energy that can drive unfavorable biochemical transformations to completion. Is not active on nucleoside triphosphates (ATP, TTP, GTP, or CTP) or nucleoside diphosphate (ADP). This chain is Inorganic pyrophosphatase, found in Haloferax volcanii (strain ATCC 29605 / DSM 3757 / JCM 8879 / NBRC 14742 / NCIMB 2012 / VKM B-1768 / DS2) (Halobacterium volcanii).